Consider the following 411-residue polypeptide: ATP-dependent Clp protease ATP-binding subunit ClpX (411 aa).

In terms of domain architecture, ClpX-type ZB spans 1–49 (MSDKNIRCSFCGRTQKEVKKLIAGPGVYICDECVKLAYDIIEEEDSEEI). Cys8, Cys11, Cys30, and Cys33 together coordinate Zn(2+). Residue 115–122 (PTGVGKTL) coordinates ATP.

This sequence belongs to the ClpX chaperone family. In terms of assembly, component of the ClpX-ClpP complex. Forms a hexameric ring that, in the presence of ATP, binds to fourteen ClpP subunits assembled into a disk-like structure with a central cavity, resembling the structure of eukaryotic proteasomes.

Functionally, ATP-dependent specificity component of the Clp protease. It directs the protease to specific substrates. Can perform chaperone functions in the absence of ClpP. This is ATP-dependent Clp protease ATP-binding subunit ClpX from Dictyoglomus turgidum (strain DSM 6724 / Z-1310).